We begin with the raw amino-acid sequence, 227 residues long: Ion-translocating oxidoreductase complex subunit E (227 aa).

The next 6 membrane-spanning stretches (helical) occupy residues 18 to 38, 39 to 59, 69 to 89, 93 to 113, 125 to 145, and 182 to 202; these read ALVQ…VTNA, LGLG…VSLV, IPVF…LMNA, GLYL…IIIG, LPAV…LVLL, and HFLL…LIAL.

It belongs to the NqrDE/RnfAE family. In terms of assembly, the complex is composed of six subunits: RnfA, RnfB, RnfC, RnfD, RnfE and RnfG.

Its subcellular location is the cell inner membrane. Functionally, part of a membrane-bound complex that couples electron transfer with translocation of ions across the membrane. The protein is Ion-translocating oxidoreductase complex subunit E of Aliivibrio fischeri (strain MJ11) (Vibrio fischeri).